The sequence spans 430 residues: Asparagine--tRNA ligase (430 aa).

Belongs to the class-II aminoacyl-tRNA synthetase family. As to quaternary structure, homodimer.

It localises to the cytoplasm. The enzyme catalyses tRNA(Asn) + L-asparagine + ATP = L-asparaginyl-tRNA(Asn) + AMP + diphosphate + H(+). The polypeptide is Asparagine--tRNA ligase (Listeria monocytogenes serovar 1/2a (strain ATCC BAA-679 / EGD-e)).